Here is a 2475-residue protein sequence, read N- to C-terminus: Polyprotein pp220 (2475 aa).

The N-myristoyl glycine; by host moiety is linked to residue G2. Residues 2184–2211 are a coiled coil; that stretch reads RNQIIGELNAFRTQLEDTRREVNNLIQT.

This sequence belongs to the asfivirus polyprotein pp220 family. Post-translationally, the polyprotein is not glycosylated. In terms of processing, specific enzymatic cleavages in vivo by the viral pS273R protease yield mature proteins.

It localises to the host cytoplasm. It is found in the host perinuclear region. Its subcellular location is the virion. The protein resides in the host nucleus. Functionally, essential for the core assembly. Its myristoyl moiety may function as a membrane-anchoring signal to bind the developing core shell to the inner viral envelope. Its function is as follows. The structural protein p34 is a component of the virus core shell. The structural protein p14 is a component of the virus core shell. In terms of biological role, the structural protein p37 is a component of the virus core shell. Functionally, the structural protein p150 is a component of the virus core shell. The chain is Polyprotein pp220 from African swine fever virus (isolate Warthog/Namibia/Wart80/1980) (ASFV).